A 110-amino-acid chain; its full sequence is Parvalbumin alpha (110 aa).

The residue at position 2 (Ser2) is an N-acetylserine. 2 positions are modified to phosphoserine: Ser2 and Ser24. 2 EF-hand domains span residues 39-74 and 78-110; these read KSAD…FSPD and LSAK…VAES. 11 residues coordinate Ca(2+): Asp52, Asp54, Ser56, Phe58, Glu60, Glu63, Asp91, Asp93, Asp95, Lys97, and Glu102.

In terms of biological role, in muscle, parvalbumin is thought to be involved in relaxation after contraction. It binds two calcium ions. The polypeptide is Parvalbumin alpha (PVALB) (Homo sapiens (Human)).